A 164-amino-acid chain; its full sequence is Transcriptional repressor NrdR (164 aa).

A zinc finger lies at 3-34 (CPKCNYHKSSVVDSRQAEDGNTIRRRRECEQC). One can recognise an ATP-cone domain in the interval 49–139 (LLVIKKDGTR…VYKSFKDVDE (91 aa)).

Belongs to the NrdR family. The cofactor is Zn(2+).

In terms of biological role, negatively regulates transcription of bacterial ribonucleotide reductase nrd genes and operons by binding to NrdR-boxes. This Streptococcus pyogenes serotype M5 (strain Manfredo) protein is Transcriptional repressor NrdR.